The primary structure comprises 182 residues: MLTQEVELNMQKSVEACQRNFNTIRTGRANTSLLDRLTVEYYGADTPLKSLATISTPDSQTLAIQPFDLGSLGLIEKAISISDLGFTPNNDGKIIRINIPPLTEERRKQFCKLASKYAEEAKISLRNIRRDAIEKIKGSEKDGEFSEDQSRDQQDSIQKITNKYINEIEKNLSGKEEEILKV.

Belongs to the RRF family.

The protein localises to the cytoplasm. In terms of biological role, responsible for the release of ribosomes from messenger RNA at the termination of protein biosynthesis. May increase the efficiency of translation by recycling ribosomes from one round of translation to another. This Prochlorococcus marinus (strain SARG / CCMP1375 / SS120) protein is Ribosome-recycling factor.